Consider the following 526-residue polypeptide: MSTTVRPDEVSSILRKQLAGFESEAEVYDVGTVLQVGDGIARVYGLSLVAAGELLEFPNKVMGMALNLEEDNVGCVLFGESNTVKEGDTVRRTNILASVPVGEAMLGRVVTPLGEPIDGKGSIETEIRVPLERRAPGVIFRKSVHEPLQTGLKAIDSMIPIGRGQRELIIGDRQTGKTAVAIDTIINQKGKGVFCIYVAIGLKGSTVAQVVNTLEKYGAMEYTTVISATASDPAPLQFIAPFAGAALGEYFRDTGRHALVVYDDLSKQAVAYRQLSLLLRRPPGREAYPGDVFYLHSRLLERAAKITDDIEVARKMNDLPDALKPLVKGGGSLTALPVIETQAGDVSAYIPTNVISITDGQIFLESNLFNSGQRPAINVGISVSRVGGAAQIKAMKKVAGTLRLDLAQFRELEAFSKFGSDLDKTTKAQLDRGARLVEILKQGQYIPMPVEKQVAIIFLGTQGLLDAVEVPHIRRFEEEFLSMLEHKHPEILKTIAEKGTLEADTAKQLKEAAERFVSSFNQKVKA.

An ATP-binding site is contributed by 171–178; the sequence is GDRQTGKT.

The protein belongs to the ATPase alpha/beta chains family. F-type ATPases have 2 components, CF(1) - the catalytic core - and CF(0) - the membrane proton channel. CF(1) has five subunits: alpha(3), beta(3), gamma(1), delta(1), epsilon(1). CF(0) has four main subunits: a, b, b' and c.

Its subcellular location is the cell inner membrane. The catalysed reaction is ATP + H2O + 4 H(+)(in) = ADP + phosphate + 5 H(+)(out). In terms of biological role, produces ATP from ADP in the presence of a proton gradient across the membrane. The alpha chain is a regulatory subunit. This chain is ATP synthase subunit alpha, found in Chlorobium limicola (strain DSM 245 / NBRC 103803 / 6330).